A 241-amino-acid chain; its full sequence is Large ribosomal subunit protein uL3 (241 aa).

The protein belongs to the universal ribosomal protein uL3 family. In terms of assembly, part of the 50S ribosomal subunit. Forms a cluster with proteins L14 and L19.

One of the primary rRNA binding proteins, it binds directly near the 3'-end of the 23S rRNA, where it nucleates assembly of the 50S subunit. This Aquifex aeolicus (strain VF5) protein is Large ribosomal subunit protein uL3.